Reading from the N-terminus, the 292-residue chain is Small ribosomal subunit biogenesis GTPase RsgA (292 aa).

A CP-type G domain is found at 64-221 (RSELFRPAVA…LVDTPGFSSL (158 aa)). Residues 113–116 (NKMD) and 164–172 (GPSGVGKST) each bind GTP. Residues C245, C250, H252, and C258 each contribute to the Zn(2+) site.

Belongs to the TRAFAC class YlqF/YawG GTPase family. RsgA subfamily. As to quaternary structure, monomer. Associates with 30S ribosomal subunit, binds 16S rRNA. Zn(2+) serves as cofactor.

The protein localises to the cytoplasm. In terms of biological role, one of several proteins that assist in the late maturation steps of the functional core of the 30S ribosomal subunit. Helps release RbfA from mature subunits. May play a role in the assembly of ribosomal proteins into the subunit. Circularly permuted GTPase that catalyzes slow GTP hydrolysis, GTPase activity is stimulated by the 30S ribosomal subunit. This chain is Small ribosomal subunit biogenesis GTPase RsgA, found in Clostridium botulinum (strain Loch Maree / Type A3).